A 569-amino-acid chain; its full sequence is S-(+)-linalool synthase, chloroplastic (569 aa).

A chloroplast-targeting transit peptide spans 1–39 (MALIATKISSRSCFVSAYPNNSPTFLISKFPNTVDSLSP). Residues Arg294, Asp331, Asp335, Arg472, and Asp475 each contribute to the (2E)-geranyl diphosphate site. The Mg(2+) site is built by Asp331 and Asp335. Positions 331–335 (DDIFD) match the DDXXD motif motif. The Mg(2+) site is built by Asp475, Ser479, and Glu483.

It belongs to the terpene synthase family. Tpsb subfamily. It depends on Mg(2+) as a cofactor. The cofactor is Mn(2+). As to expression, predominantly expressed in flowers but also in stems and siliques.

Its subcellular location is the plastid. The protein localises to the chloroplast. It carries out the reaction (2E)-geranyl diphosphate + H2O = (S)-linalool + diphosphate. The protein operates within secondary metabolite biosynthesis; terpenoid biosynthesis. Involved in monoterpene (C10) biosynthesis. The major product is (S)-linalool. This is S-(+)-linalool synthase, chloroplastic from Arabidopsis thaliana (Mouse-ear cress).